The chain runs to 234 residues: MTKLTKRMRNIREKVEVTKDYEINEAIALLKELATANFNESVDVAVNLGIDARKSDQNVRGATVLPHGTGRNVRVAVFTQGANAEAAKEAGADLVGMEDLAELVKKGEMNFDVVVASPDAMRVVGQLGTILGPRGLMPNPKVGTVTPNVAQAVKNAKAGQVRYRNDKNGIIHTTIGKVDFDGAQLKENLESLLVALKKAKPTSAKGVFLKKVSISTTMGAGVSLDQSTLETTTK.

Belongs to the universal ribosomal protein uL1 family. In terms of assembly, part of the 50S ribosomal subunit.

In terms of biological role, binds directly to 23S rRNA. The L1 stalk is quite mobile in the ribosome, and is involved in E site tRNA release. Protein L1 is also a translational repressor protein, it controls the translation of the L11 operon by binding to its mRNA. In Aliivibrio salmonicida (strain LFI1238) (Vibrio salmonicida (strain LFI1238)), this protein is Large ribosomal subunit protein uL1.